A 78-amino-acid chain; its full sequence is MSFVPVNPKPFLQGLIGKPVLVRLKWGQEYKGTLQSVDSYMNLQLLNAEELVDGVKTGDLGEILIRCNNVLWVGESTV.

The 72-residue stretch at 7–78 (NPKPFLQGLI…NVLWVGESTV (72 aa)) folds into the Sm domain.

Belongs to the snRNP Sm proteins family. SmF/LSm6 subfamily. As to quaternary structure, belongs to the 40S cdc5-associated complex (or cwf complex), a spliceosome sub-complex reminiscent of a late-stage spliceosome composed of the U2, U5 and U6 snRNAs and at least brr2, cdc5, cwf2/prp3, cwf3/syf1, cwf4/syf3, cwf5/ecm2, spp42/cwf6, cwf7/spf27, cwf8, cwf9, cwf10, cwf11, cwf12, prp45/cwf13, cwf14, cwf15, cwf16, cwf17, cwf18, cwf19, cwf20, cwf21, cwf22, cwf23, cwf24, cwf25, cwf26, cyp7/cwf27, cwf28, cwf29/ist3, lea1, msl1, prp5/cwf1, prp10, prp12/sap130, prp17, prp22, sap61, sap62, sap114, sap145, slu7, smb1, smd1, smd3, smf1, smg1 and syf2.

The protein resides in the nucleus. It is found in the cytoplasm. In terms of biological role, plays a role in pre-mRNA splicing as a core component of the spliceosomal U1, U2, U4 and U5 small nuclear ribonucleoproteins (snRNPs), the building blocks of the spliceosome. The sequence is that of Small nuclear ribonucleoprotein F (smf1) from Schizosaccharomyces pombe (strain 972 / ATCC 24843) (Fission yeast).